A 465-amino-acid polypeptide reads, in one-letter code: MPKKAKPAGSGKEEGPVPCKQMKVEAAGGPSALNFDSPSSLFESLISPIKTETFFKEFWEQKPLLIQRDDPALATYYGSLFKLTDLKSLCSRGMYYGRDVNVCRCVNGKKKVLNKDGKAHFLQLRKDFDQKRATIQLHQPQRFKDELWRIQEKLECYFGSLVGSNVYITPAGSQGLPPHYDDVEVFILQLEGEKHWRLYHPTVPLAREYSVEAEERIGRPVHEFMLKPGDLLYFPRGTIHQADTPAGLAHSTHVTISTYQNNSWGDFLLDTISGLVFDAAKEDVELRAGIPRQLLLQVESTTVATRRLSGFLRTLADRLEGTKEVLSSDMKKDFIMHRLPPYSAGDGAELSTPGGKLPRLDSVVRLQFKDHIVLTVLPDQDQSDEAQEKMVYIYHSLKNSREIHMMGNEEETESHGLRFPLSHLDALKQIWNSPAISVNDLKLTTDEEKESLVLSLWTECLIQVV.

The JmjC domain occupies 139–271 (QPQRFKDELW…NSWGDFLLDT (133 aa)). Fe cation-binding residues include histidine 179, aspartate 181, and histidine 240. Serine 309 carries the phosphoserine modification.

This sequence belongs to the ROX family. MINA53 subfamily. Requires Fe(2+) as cofactor.

The protein resides in the nucleus. The protein localises to the nucleolus. It catalyses the reaction L-histidyl-[ribosomal protein uL15] + 2-oxoglutarate + O2 = (3S)-3-hydroxy-L-histidyl-[ribosomal protein uL15] + succinate + CO2. It carries out the reaction L-histidyl-[protein] + 2-oxoglutarate + O2 = (3S)-3-hydroxy-L-histidyl-[protein] + succinate + CO2. Oxygenase that can act as both a histone lysine demethylase and a ribosomal histidine hydroxylase. Is involved in the demethylation of trimethylated 'Lys-9' on histone H3 (H3K9me3), leading to an increase in ribosomal RNA expression. Also catalyzes the hydroxylation of 60S ribosomal protein L27a on 'His-39'. May play an important role in cell growth and survival. May be involved in ribosome biogenesis, most likely during the assembly process of pre-ribosomal particles. In Pongo abelii (Sumatran orangutan), this protein is Ribosomal oxygenase 2 (RIOX2).